A 308-amino-acid polypeptide reads, in one-letter code: Formamidopyrimidine-DNA glycosylase (308 aa).

Proline 2 serves as the catalytic Schiff-base intermediate with DNA. Glutamate 3 serves as the catalytic Proton donor. Lysine 61 serves as the catalytic Proton donor; for beta-elimination activity. 3 residues coordinate DNA: histidine 100, arginine 120, and arginine 181. Residues 267-301 (AVYGQEGRPCPRCGALVRRDAFMNRSSFSCPVCQP) form an FPG-type zinc finger. Arginine 291 (proton donor; for delta-elimination activity) is an active-site residue.

Belongs to the FPG family. As to quaternary structure, monomer. Zn(2+) is required as a cofactor.

It catalyses the reaction Hydrolysis of DNA containing ring-opened 7-methylguanine residues, releasing 2,6-diamino-4-hydroxy-5-(N-methyl)formamidopyrimidine.. The catalysed reaction is 2'-deoxyribonucleotide-(2'-deoxyribose 5'-phosphate)-2'-deoxyribonucleotide-DNA = a 3'-end 2'-deoxyribonucleotide-(2,3-dehydro-2,3-deoxyribose 5'-phosphate)-DNA + a 5'-end 5'-phospho-2'-deoxyribonucleoside-DNA + H(+). Involved in base excision repair of DNA damaged by oxidation or by mutagenic agents. Acts as a DNA glycosylase that recognizes and removes damaged bases. Has a preference for oxidized purines, such as 7,8-dihydro-8-oxoguanine (8-oxoG). Has AP (apurinic/apyrimidinic) lyase activity and introduces nicks in the DNA strand. Cleaves the DNA backbone by beta-delta elimination to generate a single-strand break at the site of the removed base with both 3'- and 5'-phosphates. This chain is Formamidopyrimidine-DNA glycosylase, found in Kineococcus radiotolerans (strain ATCC BAA-149 / DSM 14245 / SRS30216).